A 1237-amino-acid polypeptide reads, in one-letter code: Anion exchange protein 2 (1237 aa).

Residues 1 to 237 (MSSAPRRPAS…SYNLQERRRI (237 aa)) form a disordered region. Over 1–704 (MSSAPRRPAS…DFRDALDPQC (704 aa)) the chain is Cytoplasmic. Composition is skewed to basic and acidic residues over residues 37 to 49 (ELHRTLGVERFEE) and 58 to 75 (GGEEPGRSYGEEDFEYHR). 2 stretches are compositionally biased toward basic residues: residues 76–85 (QSSHHIHHPL) and 94–110 (RRRKTPQGPGRKSRRRP). Ser-113, Ser-132, Ser-144, Ser-170, and Ser-172 each carry phosphoserine. A compositionally biased stretch (acidic residues) spans 120 to 133 (TIEEGEEDEDEASE). Over residues 137–151 (ARAPTQPSPASTPSS) the composition is skewed to low complexity. Residues 205-215 (GTAGGDDGGAS) show a composition bias toward gly residues. Ser-239 bears the Phosphoserine mark. Thr-253 carries the phosphothreonine modification. N6-methyllysine is present on Lys-270. Residues 286–316 (RKNAKGSVQSGREGREPGPTPRARPRAPHKP) form a disordered region. Residue Ser-439 is modified to Phosphoserine. The tract at residues 445–466 (SLLGHHHGQGAESDPHVTEPLI) is disordered. The membrane (anion exchange) stretch occupies residues 704–1237 (CLAAVIFIYF…DEYNEMPMPV (534 aa)). 4 helical membrane-spanning segments follow: residues 705–725 (LAAVIFIYFAALSPAITFGGL), 750–770 (FCLLGAQPLLVIGFSGPLLVF), 792–812 (IGFWLVLLALLMVALEGSFLV), and 822–842 (IFAFLISLIFIYETFYKLVKI). Residues 843 to 893 (FQEHPLHGCSVSNSSEADSGDNATWAGTRVTLGLGNGSSAGPAGQGRPRGQ) are Extracellular-facing. N-linked (GlcNAc...) asparagine glycans are attached at residues Asn-855, Asn-864, and Asn-878. A helical transmembrane segment spans residues 894–914 (PNTALLSLVLMAGTFFIAFFL). Over 915-929 (RKFKNGRFFPGRVRR) the chain is Cytoplasmic. The next 5 membrane-spanning stretches (helical) occupy residues 930–950 (VIGDFGVPIAILIMVLVDYSI), 985–1005 (FPVWMMVASLLPAILVFILIF), 1032–1052 (LLLIVAMGGICALFGLPWLAA), 1086–1106 (RVTGLLVALLVGLSIVIGDLL), and 1109–1129 (IPLAVLFGIFLYMGVTSLNGI). Cys-1169 carries S-palmitoyl cysteine lipidation. The helical transmembrane segment at 1170–1190 (LALLWAVMSTAASLAFPFILI) threads the bilayer.

Belongs to the anion exchanger (TC 2.A.31) family.

It is found in the apical cell membrane. The protein resides in the basolateral cell membrane. The enzyme catalyses hydrogencarbonate(in) + chloride(out) = hydrogencarbonate(out) + chloride(in). In terms of biological role, sodium-independent anion exchanger which mediates the electroneutral exchange of chloride for bicarbonate ions across the cell membrane. Plays an important role in osteoclast differentiation and function. Regulates bone resorption and calpain-dependent actin cytoskeleton organization in osteoclasts via anion exchange-dependent control of pH. Essential for intracellular pH regulation in CD8(+) T-cells upon CD3 stimulation, modulating CD8(+) T-cell response. The sequence is that of Anion exchange protein 2 (SLC4A2) from Equus caballus (Horse).